The following is a 342-amino-acid chain: UDP-3-O-acylglucosamine N-acyltransferase (342 aa).

Histidine 241 serves as the catalytic Proton acceptor.

This sequence belongs to the transferase hexapeptide repeat family. LpxD subfamily. Homotrimer.

The enzyme catalyses a UDP-3-O-[(3R)-3-hydroxyacyl]-alpha-D-glucosamine + a (3R)-hydroxyacyl-[ACP] = a UDP-2-N,3-O-bis[(3R)-3-hydroxyacyl]-alpha-D-glucosamine + holo-[ACP] + H(+). It participates in bacterial outer membrane biogenesis; LPS lipid A biosynthesis. Functionally, catalyzes the N-acylation of UDP-3-O-acylglucosamine using 3-hydroxyacyl-ACP as the acyl donor. Is involved in the biosynthesis of lipid A, a phosphorylated glycolipid that anchors the lipopolysaccharide to the outer membrane of the cell. This chain is UDP-3-O-acylglucosamine N-acyltransferase, found in Pasteurella multocida (strain Pm70).